The following is a 582-amino-acid chain: Isopropyl malate synthase AMT7 (582 aa).

Positions 61 to 341 (PVLFSTDLRD…EPGIDLSRLD (281 aa)) constitute a Pyruvate carboxyltransferase domain.

Belongs to the alpha-IPM synthase/homocitrate synthase family. LeuA type 2 subfamily.

It catalyses the reaction 3-methyl-2-oxobutanoate + acetyl-CoA + H2O = (2S)-2-isopropylmalate + CoA + H(+). It participates in mycotoxin biosynthesis. Isopropyl malate synthase; part of the gene clusters that mediate the biosynthesis of AM-toxins, host-selective toxins (HSTs) causing Alternaria blotch on apple, a worldwide distributed disease. AM-toxins are cyclic depsipeptides containing the 3 residues 2-hydroxy-isovaleric acid (2-HIV), dehydroalanine, L-alanine which are common for all 3 AM-toxins I to III. The fourth precursor is L-alpha-amino-methoxyphenyl-valeric acid (L-Amv) for AM-toxin I, L-alpha-amino-phenyl-valeric acid (L-Apv) for AM-toxin II, and L-alpha-amino-hydroxyphenyl-valeric acid (L-Ahv) for AM-toxin III. AM-toxins have two target sites for affecting susceptible apple cells; they cause invagination of the plasma membrane and electrolyte loss and chloroplast disorganization. The non-ribosomal peptide synthetase AMT1 contains 4 catalytic modules and is responsible for activation of each residue in AM-toxin. The aldo-keto reductase AMT2 catalyzes the conversion of 2-keto-isovaleric acid (2-KIV) to 2-hydroxy-isovaleric acid (2-HIV), one of the precursor residues incorporated by AMT1 during AM-toxin biosynthesis, by reduction of its ketone to an alcohol. The cytochrome P450 monooxygenase AMT3 and the thioesterase AMT4 are also important for AM-toxin production, but their exact function within the AM-toxin biosynthesis are not known yet. Up to 21 proteins (including AMT1 to AMT4) are predicted to be involved in AM-toxin biosynthesis since their expression ishighly up-regulated in AM-toxin-producing cultures. The chain is Isopropyl malate synthase AMT7 from Alternaria alternata (Alternaria rot fungus).